The sequence spans 438 residues: Hydrogenobyrinate a,c-diamide synthase (438 aa).

The GATase cobBQ-type domain occupies 247 to 438 (RIALAEDAAF…TFFHAIAKGG (192 aa)). Cys-329 (nucleophile) is an active-site residue.

Belongs to the CobB/CbiA family. Mg(2+) is required as a cofactor.

The catalysed reaction is hydrogenobyrinate + 2 L-glutamine + 2 ATP + 2 H2O = hydrogenobyrinate a,c-diamide + 2 L-glutamate + 2 ADP + 2 phosphate + 2 H(+). It functions in the pathway cofactor biosynthesis; adenosylcobalamin biosynthesis; cob(II)yrinate a,c-diamide from precorrin-2 (aerobic route): step 9/10. Catalyzes the ATP-dependent amidation of the two carboxylate groups at positions a and c of hydrogenobyrinate, using either L-glutamine or ammonia as the nitrogen source. This Agrobacterium fabrum (strain C58 / ATCC 33970) (Agrobacterium tumefaciens (strain C58)) protein is Hydrogenobyrinate a,c-diamide synthase.